The sequence spans 1163 residues: Zinc finger protein 516 (1163 aa).

Residues 1-13 are compositionally biased toward basic and acidic residues; the sequence is MDRNREAEMELRR. The segment at 1–26 is disordered; sequence MDRNREAEMELRRGPSPTRAGRGHEV. The mediates promoter DNA-binding and activation of transcription stretch occupies residues 1–431; the sequence is MDRNREAEME…ATRGKVAEPA (431 aa). C2H2-type zinc fingers lie at residues 34 to 56, 62 to 84, 174 to 197, 200 to 223, 248 to 270, 276 to 298, and 335 to 357; these read HTCCICGKSFPFQSSLSQHMRKH, YKCPYCDHRASQKGNLKIHIRSH, VQCSFCKSQFERKKDLELHVHQAH, FKCRLCSYATLREESLLSHIERDH, FPCEVCGQAFSQTWFLKAHMKKH, HGCHICGRRFKEPWFLKNHMKAH, and EVCAKCGNLFTNLDSLNAHNAIH. The segment covering 460 to 469 has biased composition (basic and acidic residues); that stretch reads SQEKRKREQD. 3 disordered regions span residues 460 to 512, 533 to 667, and 679 to 730; these read SQEK…TGQG, HSRV…QEQH, and HPKQ…APDL. A compositionally biased stretch (low complexity) spans 496-507; it reads RSAARPNRRAAA. A C2H2-type 8 zinc finger spans residues 515 to 537; that stretch reads SECFECGKIFRTYHQMVLHSRVH. A compositionally biased stretch (basic and acidic residues) spans 542 to 552; sequence RERDSDGDRAA. Residues 561 to 572 show a composition bias toward polar residues; that stretch reads EGDSASQPSSPG. Acidic residues predominate over residues 588 to 598; it reads EAAEDSGEEGA. Polar residues predominate over residues 615 to 625; that stretch reads EVTSTELSSGD. Over residues 626-641 the composition is skewed to basic and acidic residues; the sequence is QSHKMGDNASERDTGE. Lysine 643 participates in a covalent cross-link: Glycyl lysine isopeptide (Lys-Gly) (interchain with G-Cter in SUMO2). Basic and acidic residues predominate over residues 656–667; it reads SSRETSRRQEQH. Lysine 681 is covalently cross-linked (Glycyl lysine isopeptide (Lys-Gly) (interchain with G-Cter in SUMO2)). Basic and acidic residues predominate over residues 706 to 720; sequence PAEKLSDLHNKEHSG. The C2H2-type 9; atypical zinc-finger motif lies at 760-783; the sequence is HPCPYCSHKTYYPEVLWMHKRIWH. Residues 838 to 1007 form a disordered region; sequence TQVPGGMPGS…PPREPPSKAA (170 aa). The span at 840-857 shows a compositional bias: low complexity; it reads VPGGMPGSKSGSSPLGVV. Glycyl lysine isopeptide (Lys-Gly) (interchain with G-Cter in SUMO2) cross-links involve residues lysine 1043 and lysine 1062. The segment at 1098-1120 adopts a C2H2-type 10 zinc-finger fold; sequence FVCIECGKSFHQPGHLRAHMRAH. Positions 1126–1163 are disordered; sequence SDGPRGSEVHTTSADAPKQGRDHSNTGTVQTVPLRKGT.

It belongs to the krueppel C2H2-type zinc-finger protein family. In terms of assembly, interacts with PRDM16; the interaction is direct and may play a role in the transcription of brown adipose tissue-specific genes. Interacts with PWWP2B. Interacts with HDAC1; this interaction is enhanced in the presence of PWWP2B.

The protein resides in the nucleus. In terms of biological role, transcriptional regulator that binds to the promoter and activates the transcription of genes promoting brown adipose tissue (BAT) differentiation. Among brown adipose tissue-specific genes, binds the proximal region of the promoter of the UCP1 gene to activate its transcription and thereby regulate thermogenesis. May also play a role in the cellular response to replication stress. This chain is Zinc finger protein 516, found in Homo sapiens (Human).